Consider the following 248-residue polypeptide: DNA repair protein RecO (248 aa).

It belongs to the RecO family.

Its function is as follows. Involved in DNA repair and RecF pathway recombination. This Thermoanaerobacter sp. (strain X514) protein is DNA repair protein RecO.